A 366-amino-acid polypeptide reads, in one-letter code: Aminomethyltransferase (366 aa).

Belongs to the GcvT family. In terms of assembly, the glycine cleavage system is composed of four proteins: P, T, L and H.

It carries out the reaction N(6)-[(R)-S(8)-aminomethyldihydrolipoyl]-L-lysyl-[protein] + (6S)-5,6,7,8-tetrahydrofolate = N(6)-[(R)-dihydrolipoyl]-L-lysyl-[protein] + (6R)-5,10-methylene-5,6,7,8-tetrahydrofolate + NH4(+). Functionally, the glycine cleavage system catalyzes the degradation of glycine. This is Aminomethyltransferase from Bacillus velezensis (strain DSM 23117 / BGSC 10A6 / LMG 26770 / FZB42) (Bacillus amyloliquefaciens subsp. plantarum).